Consider the following 201-residue polypeptide: 3-isopropylmalate dehydratase small subunit (201 aa).

This sequence belongs to the LeuD family. LeuD type 1 subfamily. Heterodimer of LeuC and LeuD.

It carries out the reaction (2R,3S)-3-isopropylmalate = (2S)-2-isopropylmalate. The protein operates within amino-acid biosynthesis; L-leucine biosynthesis; L-leucine from 3-methyl-2-oxobutanoate: step 2/4. In terms of biological role, catalyzes the isomerization between 2-isopropylmalate and 3-isopropylmalate, via the formation of 2-isopropylmaleate. The protein is 3-isopropylmalate dehydratase small subunit of Micrococcus luteus (strain ATCC 4698 / DSM 20030 / JCM 1464 / CCM 169 / CCUG 5858 / IAM 1056 / NBRC 3333 / NCIMB 9278 / NCTC 2665 / VKM Ac-2230) (Micrococcus lysodeikticus).